A 245-amino-acid chain; its full sequence is Exosome complex component RRP41 (245 aa).

Position 2 is an N-acetylalanine (Ala2).

The protein belongs to the RNase PH family. Component of the RNA exosome core complex (Exo-9), composed of EXOSC1, EXOSC2, EXOSC3, EXOSC4, EXOSC5, EXOSC6, EXOSC7, EXOSC8 and EXOSC9; within the complex interacts with EXOSC2, EXOSC7 and EXOSC9. The catalytically inactive RNA exosome core complex (Exo-9) associates with the catalytic subunit EXOSC10/RRP6. Exo-9 may associate with DIS3 to form the nucleolar exosome complex, or DIS3L to form the cytoplasmic exosome complex. Exo-9 is formed by a hexameric base ring consisting of the heterodimers EXOSC4-EXOSC9, EXOSC5-EXOSC8 and EXOSC6-EXOSC7, and a cap ring consisting of EXOSC1, EXOSC2 and EXOSC3. The RNA exosome complex associates with cofactors C1D/RRP47, MPHOSPH6/MPP6 and MTREX/MTR4. Interacts with DDX60. Interacts with DIS3; the interaction is direct.

The protein resides in the cytoplasm. It localises to the nucleus. It is found in the nucleolus. The protein localises to the nucleoplasm. Its function is as follows. Non-catalytic component of the RNA exosome complex which has 3'-&gt;5' exoribonuclease activity and participates in a multitude of cellular RNA processing and degradation events. In the nucleus, the RNA exosome complex is involved in proper maturation of stable RNA species such as rRNA, snRNA and snoRNA, in the elimination of RNA processing by-products and non-coding 'pervasive' transcripts, such as antisense RNA species and promoter-upstream transcripts (PROMPTs), and of mRNAs with processing defects, thereby limiting or excluding their export to the cytoplasm. The RNA exosome may be involved in Ig class switch recombination (CSR) and/or Ig variable region somatic hypermutation (SHM) by targeting AICDA deamination activity to transcribed dsDNA substrates. In the cytoplasm, the RNA exosome complex is involved in general mRNA turnover and specifically degrades inherently unstable mRNAs containing AU-rich elements (AREs) within their 3' untranslated regions, and in RNA surveillance pathways, preventing translation of aberrant mRNAs. It seems to be involved in degradation of histone mRNA. The catalytic inactive RNA exosome core complex of 9 subunits (Exo-9) is proposed to play a pivotal role in the binding and presentation of RNA for ribonucleolysis, and to serve as a scaffold for the association with catalytic subunits and accessory proteins or complexes. EXOSC4 binds to ARE-containing RNAs. This Homo sapiens (Human) protein is Exosome complex component RRP41 (EXOSC4).